The following is a 538-amino-acid chain: [Pyruvate dehydrogenase [acetyl-transferring]]-phosphatase 1, mitochondrial (538 aa).

Residues 1 to 71 (MPAPTQLFFP…WWQYTQGRRY (71 aa)) constitute a mitochondrion transit peptide. Residues 109–525 (VLGFDSNQLP…DDITIIVVQF (417 aa)) enclose the PPM-type phosphatase domain. Residues Asp144 and Gly145 each contribute to the Mn(2+) site. Lys202 is subject to N6-acetyllysine. 2 residues coordinate Mn(2+): Asp418 and Asp516.

It belongs to the PP2C family. In terms of assembly, heterodimer of a catalytic (PDP1) and a regulatory (PDPR) subunit. The cofactor is Mn(2+). Mg(2+) is required as a cofactor.

The protein localises to the mitochondrion. It catalyses the reaction O-phospho-L-seryl-[pyruvate dehydrogenase E1 alpha subunit] + H2O = L-seryl-[pyruvate dehydrogenase E1 alpha subunit] + phosphate. With respect to regulation, magnesium-dependent and calcium-stimulated. PDP1 activity strongly depends on its Ca(2+)-dependent binding to the lipoyl domain of E2 subunit of component of the pyruvate dehydrogenase complex. In terms of biological role, mitochondrial enzyme that catalyzes the dephosphorylation and concomitant reactivation of the alpha subunit of the E1 component of the pyruvate dehydrogenase complex (PDC), thereby stimulating the conversion of pyruvate into acetyl-CoA. In Bos taurus (Bovine), this protein is [Pyruvate dehydrogenase [acetyl-transferring]]-phosphatase 1, mitochondrial (PDP1).